The primary structure comprises 593 residues: Trehalose synthase/amylase TreS (593 aa).

Asp90 is a binding site for substrate. Asn132 is a binding site for Ca(2+). 2 residues coordinate substrate: His133 and Gln198. Asp200 lines the Ca(2+) pocket. A substrate-binding site is contributed by Arg228. The Nucleophile role is filled by Asp230. Tyr234, Leu235, and Glu237 together coordinate Ca(2+). Glu272 (proton donor) is an active-site residue. His341 and Asp342 together coordinate substrate.

Belongs to the glycosyl hydrolase 13 family. TreS subfamily. In terms of assembly, homohexamer.

The enzyme catalyses D-maltose = alpha,alpha-trehalose. The catalysed reaction is Endohydrolysis of (1-&gt;4)-alpha-D-glucosidic linkages in polysaccharides containing three or more (1-&gt;4)-alpha-linked D-glucose units.. It functions in the pathway glycan biosynthesis; glycogen biosynthesis. With respect to regulation, the amylase activity is stimulated by addition of Ca(2+), but this cation and other divalent cations inhibit the trehalose synthase activity. In addition, trehalose synthase activity, but not amylase activity, is strongly inhibited, and in a competitive manner, by validoxylamine. On the other hand, amylase, but not trehalose synthase activity, is inhibited by the known transition-state amylase inhibitor, acarbose, suggesting the possibility of two different active sites. Other metal ions such as Mg(2+), Mn(2+), and Co(2+) are also somewhat effective in the stimulation of amylase activity, but Hg(2+), Cu(2+), Ni(2+) and Zn(2+) are inhibitory. Catalyzes the reversible interconversion of maltose and trehalose by transglucosylation. Maltose is the preferred substrate. To a lesser extent, also displays amylase activity, catalyzing the endohydrolysis of (1-&gt;4)-alpha-D-glucosidic linkages in glycogen and maltooligosaccharides such as maltoheptaose, to produce maltose which then can be converted to trehalose. TreS plays a key role in the utilization of trehalose for the production of glycogen and alpha-glucan via the TreS-Pep2 branch involved in the biosynthesis of maltose-1-phosphate (M1P). Might also function as a sensor and/or regulator of trehalose levels within the cell. Thus, when trehalose levels in the cell become dangerously low, TreS can expedite the conversion of glycogen to maltose via its amylase activity and then convert the maltose to trehalose; but this enzyme also can expedite or promote the conversion of trehalose to glycogen when cytoplasmic trehalose levels become too high. Is also able to catalyze the hydrolytic cleavage of alpha-aryl glucosides, as well as alpha-glucosyl fluoride in vitro. The sequence is that of Trehalose synthase/amylase TreS from Mycolicibacterium smegmatis (strain ATCC 700084 / mc(2)155) (Mycobacterium smegmatis).